A 311-amino-acid polypeptide reads, in one-letter code: Ribonuclease HIII (311 aa).

The region spanning 95–311 (MSIVGSDEVG…NTEKAFRLLK (217 aa)) is the RNase H type-2 domain. Residues Asp101, Glu102, and Asp206 each coordinate a divalent metal cation.

The protein belongs to the RNase HII family. RnhC subfamily. Mn(2+) is required as a cofactor. Requires Mg(2+) as cofactor.

The protein localises to the cytoplasm. The enzyme catalyses Endonucleolytic cleavage to 5'-phosphomonoester.. Endonuclease that specifically degrades the RNA of RNA-DNA hybrids. This is Ribonuclease HIII from Bacillus cereus (strain ATCC 10987 / NRS 248).